We begin with the raw amino-acid sequence, 496 residues long: MLKIKLEKTTFENAKAECSLVFITNKDFDHVWVKNKKLLETFKYEGEGAFLDQENKILYVGVKEDDVHLLRESACLAVRTLKKLAFKSVKVGVYTCDTHAKDNALLENLKALFLGLKLGLYEYDTFKPNKKESVLKEVIVALELHKHCEKTCANSLEKSAKEALKYAEIMTESLNIVRDLVNTPPMIGTPVYMAEVAQKVAKENHLEIHVHDEKFLEEKKMNAFLAVNKASLAVNPPRLIHLVYKPKKAKKKIALVGKGLTYDCGGLSLKPADYMVTMKADKGGGSAVIGLLNALAKLGVEAEVHGIIGATENMIGPAAYKPDDILISKEGKSIEVRNTDAEGRLVLADCLSYAQDLSPDVIVDFATLTGACVVGLGEFTSAIMGHNEELKNLFETSGLESGELLAKLPFNRHLKKLIESKIADVCNISSSRYGGAITAGLFLNEFIRDEFKDKWLHIDIAGPAYVEKEWDVNSFGASGAGVRACTAFVEELLKKA.

Residues K258 and D263 each coordinate Mn(2+). Residue K270 is part of the active site. 3 residues coordinate Mn(2+): D281, D340, and E342. Residue R344 is part of the active site.

Belongs to the peptidase M17 family. Mn(2+) serves as cofactor.

Its subcellular location is the cytoplasm. The catalysed reaction is Release of an N-terminal amino acid, Xaa-|-Yaa-, in which Xaa is preferably Leu, but may be other amino acids including Pro although not Arg or Lys, and Yaa may be Pro. Amino acid amides and methyl esters are also readily hydrolyzed, but rates on arylamides are exceedingly low.. It catalyses the reaction Release of an N-terminal amino acid, preferentially leucine, but not glutamic or aspartic acids.. Functionally, presumably involved in the processing and regular turnover of intracellular proteins. Catalyzes the removal of unsubstituted N-terminal amino acids from various peptides. This Helicobacter pylori (strain J99 / ATCC 700824) (Campylobacter pylori J99) protein is Cytosol aminopeptidase (pepA).